A 123-amino-acid chain; its full sequence is Large ribosomal subunit protein uL14 (123 aa).

The protein belongs to the universal ribosomal protein uL14 family. Part of the 50S ribosomal subunit. Forms a cluster with proteins L3 and L19. In the 70S ribosome, L14 and L19 interact and together make contacts with the 16S rRNA in bridges B5 and B8.

In terms of biological role, binds to 23S rRNA. Forms part of two intersubunit bridges in the 70S ribosome. The chain is Large ribosomal subunit protein uL14 from Corynebacterium jeikeium (strain K411).